Reading from the N-terminus, the 298-residue chain is MSATPSHIPVLVNECLSLFADRHPKFFCDVTVGAGGHAEAFLSAYPSIVSYDASDRDVAALSMAKEHLEKFGDRVHFHHASFEDLSKDPREHVYDGILADLGVSSMQLDNLSRGFSFQGDDHALDMRMDVTKGITASEVLHTLREEELGKIFREYGEEPQWKNAAKAIVHFRRRKKIVTVRDLKEATAKVFPSYRLRKKIHPLTLIFQALRVYVNQEDVQLKVLLESAMRWLAPGGRLIIISFCSSEDRPVKWFFREAEKSGLGMILTKKVIMPTYEEIRKNPRCRSAKLRCFEKKFL.

S-adenosyl-L-methionine-binding positions include 35–37, Asp55, Phe82, Asp100, and Gln107; that span reads GGH.

Belongs to the methyltransferase superfamily. RsmH family.

It is found in the cytoplasm. It carries out the reaction cytidine(1402) in 16S rRNA + S-adenosyl-L-methionine = N(4)-methylcytidine(1402) in 16S rRNA + S-adenosyl-L-homocysteine + H(+). Functionally, specifically methylates the N4 position of cytidine in position 1402 (C1402) of 16S rRNA. The chain is Ribosomal RNA small subunit methyltransferase H from Chlamydia abortus (strain DSM 27085 / S26/3) (Chlamydophila abortus).